Reading from the N-terminus, the 284-residue chain is tRNA pseudouridine synthase A (284 aa).

Asp-62 functions as the Nucleophile in the catalytic mechanism. Residue Tyr-123 participates in substrate binding.

It belongs to the tRNA pseudouridine synthase TruA family. As to quaternary structure, homodimer.

The catalysed reaction is uridine(38/39/40) in tRNA = pseudouridine(38/39/40) in tRNA. In terms of biological role, formation of pseudouridine at positions 38, 39 and 40 in the anticodon stem and loop of transfer RNAs. The polypeptide is tRNA pseudouridine synthase A (Streptomyces griseus subsp. griseus (strain JCM 4626 / CBS 651.72 / NBRC 13350 / KCC S-0626 / ISP 5235)).